Reading from the N-terminus, the 350-residue chain is Histidinol-phosphate aminotransferase (350 aa).

An N6-(pyridoxal phosphate)lysine modification is found at K209.

It belongs to the class-II pyridoxal-phosphate-dependent aminotransferase family. Histidinol-phosphate aminotransferase subfamily. In terms of assembly, homodimer. It depends on pyridoxal 5'-phosphate as a cofactor.

It catalyses the reaction L-histidinol phosphate + 2-oxoglutarate = 3-(imidazol-4-yl)-2-oxopropyl phosphate + L-glutamate. The protein operates within amino-acid biosynthesis; L-histidine biosynthesis; L-histidine from 5-phospho-alpha-D-ribose 1-diphosphate: step 7/9. The protein is Histidinol-phosphate aminotransferase of Citrifermentans bemidjiense (strain ATCC BAA-1014 / DSM 16622 / JCM 12645 / Bem) (Geobacter bemidjiensis).